Here is a 96-residue protein sequence, read N- to C-terminus: Large ribosomal subunit protein eL43 (96 aa).

The segment at 41-62 (CPVCGFMKLKRISTSIWECKKC) adopts a C4-type zinc-finger fold.

This sequence belongs to the eukaryotic ribosomal protein eL43 family. Zn(2+) serves as cofactor.

This is Large ribosomal subunit protein eL43 from Methanococcus aeolicus (strain ATCC BAA-1280 / DSM 17508 / OCM 812 / Nankai-3).